Here is a 153-residue protein sequence, read N- to C-terminus: Ribosome maturation factor RimP (153 aa).

It belongs to the RimP family.

The protein localises to the cytoplasm. Functionally, required for maturation of 30S ribosomal subunits. This chain is Ribosome maturation factor RimP, found in Coxiella burnetii (strain Dugway 5J108-111).